Here is a 122-residue protein sequence, read N- to C-terminus: Large ribosomal subunit protein uL18 (122 aa).

Belongs to the universal ribosomal protein uL18 family. As to quaternary structure, part of the 50S ribosomal subunit; part of the 5S rRNA/L5/L18/L25 subcomplex. Contacts the 5S and 23S rRNAs.

Functionally, this is one of the proteins that bind and probably mediate the attachment of the 5S RNA into the large ribosomal subunit, where it forms part of the central protuberance. This is Large ribosomal subunit protein uL18 from Kosmotoga olearia (strain ATCC BAA-1733 / DSM 21960 / TBF 19.5.1).